The sequence spans 881 residues: MSELLLRLNFLLLLLLSCVSPSSFVTFNNPVVGLGACGPHQIQAFTQFKNEFNTRACNHSSPWNGVWCDNSTGAVTKIQFMACLSGTLKSNSSLFQFHELRSLLLIHNNFTSSSISSKFGMLNKLEVLFLSSSGFLGQVPFSFSNLSMLSALDLSDNELTGSLSFVRNLRKLRVLDVSYNHFSGILNPNSSLFELHHLTYLSLGSNSFTSSTLPYEFGNLNKLELLDVSSNSFFGQVPPTISNLTQLTELYLPLNDFTGSLPLVQNLTKLSILALFGNHFSGTIPSSLFTMPFLSYLSLKGNNLNGSIEVPNSSSSSRLESLYLGKNHFEGKILKPISKLINLKELDLSFLSTSYPIDLSLFSSFKSLLVLDLTGDWISQAGLSSDSYISLTLEALYMKQCNISDFPNILKSLPNLECIDVSNNRVSGKIPEWLWSLPRLSSVFIGDNLLTGFEGSSEILVNSSVQILVLDSNSLEGALPHLPLSIIYFSARYNRFKGDIPLSICNRSSLDVLDLRYNNFTGPIPPCLSNLLFLNLRKNNLEGSIPDTYFADAPLRSLDVGYNRLTGKLPRSLLNCSALQFLSVDHNGIEDTFPFYLKVLPKLQVLLLSSNKFYGPLSPPNQGSLGFPELRILEIAGNKLTGSLPQDFFVNWKASSLTMNEDQGLYMVYSKVVYGIYYLSYLATIDLQYKGLSMEQKWVLTSSATIDLSGNRLEGEIPESIGLLKALIALNLSNNAFTGHIPLSLANLVKIESLDLSSNQLSGTIPNGLGTLSFLAYVNVSHNQLNGEIPQGTQITGQPKSSFEGNAGLCGLPLQQRCFGTNAPPAHQFKEEEDEEQEQVLNWEGVAIGYGVGVLLGLAIAQLIASYKPEWLACLIKSRNR.

The signal sequence occupies residues 1–21; that stretch reads MSELLLRLNFLLLLLLSCVSP. The Extracellular segment spans residues 22-844; sequence SSFVTFNNPV…EEQEQVLNWE (823 aa). Asn58, Asn70, Asn91, Asn109, and Asn145 each carry an N-linked (GlcNAc...) asparagine glycan. LRR repeat units lie at residues 97–121, 122–145, 146–169, 170–195, 197–219, 220–244, 245–267, 268–291, 293–317, 319–340, 342–364, 365–390, 391–412, 413–437, 439–462, and 463–486; these read FHEL…KFGM, LNKL…SFSN, LSML…VRNL, RKLR…LFEL, HLTY…EFGN, LNKL…ISNL, TQLT…VQNL, TKLS…LFTM, FLSY…SSSS, LESL…ISKL, NLKE…LFSS, FKSL…SYIS, LTLE…ILKS, LPNL…LWSL, RLSS…ILVN, and SSVQ…PLSI. N-linked (GlcNAc...) asparagine glycosylation is present at Asn189. N-linked (GlcNAc...) asparagine glycans are attached at residues Asn243 and Asn266. Residues Asn305 and Asn312 are each glycosylated (N-linked (GlcNAc...) asparagine). Residue Asn402 is glycosylated (N-linked (GlcNAc...) asparagine). N-linked (GlcNAc...) asparagine glycosylation is present at Asn462. The stretch at 487 to 506 is one LRR 17; degenerate repeat; the sequence is IYFSARYNRFKGDIPLSICN. N-linked (GlcNAc...) asparagine glycosylation is found at Asn506 and Asn519. LRR repeat units lie at residues 507–528, 529–552, 554–576, 578–599, 600–624, 627–651, 701–724, 725–748, 749–772, and 774–797; these read RSSL…PPCL, SNLL…YFAD, PLRS…LLNC, ALQF…YLKV, LPKL…NQGS, FPEL…FFVN, TSSA…IGLL, KALI…LANL, VKIE…LGTL, and FLAY…QITG. An N-linked (GlcNAc...) asparagine glycan is attached at Asn575. Asn731 carries N-linked (GlcNAc...) asparagine glycosylation. N-linked (GlcNAc...) asparagine glycosylation occurs at Asn779. A helical membrane pass occupies residues 845-865; sequence GVAIGYGVGVLLGLAIAQLIA. Residues 866 to 881 lie on the Cytoplasmic side of the membrane; the sequence is SYKPEWLACLIKSRNR.

It belongs to the RLP family.

It localises to the cell membrane. Functionally, may be involved in ABA-induced senescence responses. This Arabidopsis thaliana (Mouse-ear cress) protein is Receptor-like protein 41.